Consider the following 504-residue polypeptide: 26S proteasome non-ATPase regulatory subunit 5 (504 aa).

Ala-2 is modified (N-acetylalanine).

Belongs to the proteasome subunit S5B/HSM3 family. As to quaternary structure, interacts with PSMC1, PSMC2, PSMD1 and PSMD6. Part of transient complex containing PSMD5, PSMC2, PSMC1 and PSMD2 formed during the assembly of the 26S proteasome.

Acts as a chaperone during the assembly of the 26S proteasome, specifically of the base subcomplex of the PA700/19S regulatory complex (RC). In the initial step of the base subcomplex assembly is part of an intermediate PSMD5:PSMC2:PSMC1:PSMD2 module which probably assembles with a PSMD10:PSMC4:PSMC5:PAAF1 module followed by dissociation of PSMD5. This chain is 26S proteasome non-ATPase regulatory subunit 5 (PSMD5), found in Homo sapiens (Human).